A 146-amino-acid polypeptide reads, in one-letter code: Late protein OPG112 (146 aa).

Residues 10-32 form a helical membrane-spanning segment; that stretch reads LAMTAFFGELSTLDIMALIMSIF.

The protein belongs to the orthopoxvirus OPG112 family.

Its subcellular location is the host membrane. The protein localises to the host cytoplasm. Contributes to the formation of crescents and immature virions (IV). Interacts with phosphatidylinositol-3-phosphate (PI3P) and phosphatidylinositol-4-phosphate (PI4P) lipids in order to form virion membranes. Mechanistically, mediates proper formation of OPG125-hexamers, and hence the honey comb lattice and spherical immature virus. The protein is Late protein OPG112 (OPG112) of Bos taurus (Bovine).